Here is a 172-residue protein sequence, read N- to C-terminus: Large ribosomal subunit protein uL10 (172 aa).

This sequence belongs to the universal ribosomal protein uL10 family. Part of the ribosomal stalk of the 50S ribosomal subunit. The N-terminus interacts with L11 and the large rRNA to form the base of the stalk. The C-terminus forms an elongated spine to which L12 dimers bind in a sequential fashion forming a multimeric L10(L12)X complex.

In terms of biological role, forms part of the ribosomal stalk, playing a central role in the interaction of the ribosome with GTP-bound translation factors. The chain is Large ribosomal subunit protein uL10 from Macrococcus caseolyticus (strain JCSC5402) (Macrococcoides caseolyticum).